A 209-amino-acid chain; its full sequence is Ribosome maturation factor RimM (209 aa).

The tract at residues 1-28 (MARRPQRPAPSGRAGAGRGAAGAAPPGP) is disordered. The PRC barrel domain maps to 123–197 (EDEFFTADLV…RVTIAPPEDL (75 aa)).

This sequence belongs to the RimM family. As to quaternary structure, binds ribosomal protein uS19.

It localises to the cytoplasm. Functionally, an accessory protein needed during the final step in the assembly of 30S ribosomal subunit, possibly for assembly of the head region. Essential for efficient processing of 16S rRNA. May be needed both before and after RbfA during the maturation of 16S rRNA. It has affinity for free ribosomal 30S subunits but not for 70S ribosomes. The chain is Ribosome maturation factor RimM from Methylobacterium sp. (strain 4-46).